A 142-amino-acid chain; its full sequence is Immunoglobulin omega chain (142 aa).

The first 19 residues, 1–19 (MAWTSVLLMLLAHLTGCGP), serve as a signal peptide directing secretion. A framework-1 region spans residues 20-41 (QPMVHQPPSASSSLGATIRLSC). A disulfide bond links Cys-41 and Cys-115. Residues 42 to 56 (TLSNDHNIGIYSIYW) are complementarity-determining-1. The segment at 57–70 (YQQRPGHPPRFLLR) is framework-2. Positions 71 to 81 (YFSHSDKHQGP) are complementarity-determining-2. Residues 82–115 (DIPPRFSGSKDTARNLGYLSISELQPEDEAVYYC) form a framework-3 region.

The protein belongs to the immunoglobulin superfamily. In terms of tissue distribution, only expressed by pre-B-cells.

Functionally, associates with the Ig-mu chain to form a molecular complex that is expressed on the surface of pre-B-cells. This complex presumably regulates Ig gene rearrangements in the early steps of B-cell differentiation. This is Immunoglobulin omega chain from Mus musculus (Mouse).